We begin with the raw amino-acid sequence, 382 residues long: Galactokinase (382 aa).

Residue glutamate 34–aspartate 37 participates in substrate binding. Glycine 124 to serine 130 is an ATP binding site. 2 residues coordinate Mg(2+): serine 130 and glutamate 162. Residue aspartate 174 is the Proton acceptor of the active site. Tyrosine 223 contributes to the substrate binding site.

Belongs to the GHMP kinase family. GalK subfamily.

The protein resides in the cytoplasm. The catalysed reaction is alpha-D-galactose + ATP = alpha-D-galactose 1-phosphate + ADP + H(+). It functions in the pathway carbohydrate metabolism; galactose metabolism. Functionally, catalyzes the transfer of the gamma-phosphate of ATP to D-galactose to form alpha-D-galactose-1-phosphate (Gal-1-P). In Cronobacter sakazakii (strain ATCC BAA-894) (Enterobacter sakazakii), this protein is Galactokinase.